The primary structure comprises 340 residues: MDRIVEIEKADFEEEIETSLRPTSFDDYIGQSKIKENLKVFIAAAKKRAECLDHVLFYGPPGLGKTTLAHIIANEMGVSIKITAAPMIEKSGDLAAILTNLEENDVLFIDEIHRLSSAIEEVLYSAMEDFRLDIIIGSGPAAQTIKIDIPKFTLIGATTRAGMISAPLRDRFGMQFRLNFYTSDELAKIVQIAAVKLNKECEKNAALQIAKRSRGTPRIALRLLKRIRDFAEVNNENIINENRAKSSLDALGVNDLGFDEMDLKYLEILGSTKNRALGLSTISAALSEDEGTIEDVIEPYLLANGYIERTAKGRIITAKSCEILGIKYKMTQKGLFDEDQ.

The interval 1–181 is large ATPase domain (RuvB-L); the sequence is MDRIVEIEKA…FGMQFRLNFY (181 aa). ATP contacts are provided by residues Leu20, Arg21, Gly62, Lys65, Thr66, Thr67, 128–130, Arg171, Tyr181, and Arg218; that span reads EDF. Thr66 is a binding site for Mg(2+). Residues 182 to 252 are small ATPAse domain (RuvB-S); that stretch reads TSDELAKIVQ…RAKSSLDALG (71 aa). Residues 255–340 are head domain (RuvB-H); the sequence is DLGFDEMDLK…TQKGLFDEDQ (86 aa). Residues Arg309 and Arg314 each coordinate DNA.

This sequence belongs to the RuvB family. As to quaternary structure, homohexamer. Forms an RuvA(8)-RuvB(12)-Holliday junction (HJ) complex. HJ DNA is sandwiched between 2 RuvA tetramers; dsDNA enters through RuvA and exits via RuvB. An RuvB hexamer assembles on each DNA strand where it exits the tetramer. Each RuvB hexamer is contacted by two RuvA subunits (via domain III) on 2 adjacent RuvB subunits; this complex drives branch migration. In the full resolvosome a probable DNA-RuvA(4)-RuvB(12)-RuvC(2) complex forms which resolves the HJ.

The protein localises to the cytoplasm. The enzyme catalyses ATP + H2O = ADP + phosphate + H(+). In terms of biological role, the RuvA-RuvB-RuvC complex processes Holliday junction (HJ) DNA during genetic recombination and DNA repair, while the RuvA-RuvB complex plays an important role in the rescue of blocked DNA replication forks via replication fork reversal (RFR). RuvA specifically binds to HJ cruciform DNA, conferring on it an open structure. The RuvB hexamer acts as an ATP-dependent pump, pulling dsDNA into and through the RuvAB complex. RuvB forms 2 homohexamers on either side of HJ DNA bound by 1 or 2 RuvA tetramers; 4 subunits per hexamer contact DNA at a time. Coordinated motions by a converter formed by DNA-disengaged RuvB subunits stimulates ATP hydrolysis and nucleotide exchange. Immobilization of the converter enables RuvB to convert the ATP-contained energy into a lever motion, pulling 2 nucleotides of DNA out of the RuvA tetramer per ATP hydrolyzed, thus driving DNA branch migration. The RuvB motors rotate together with the DNA substrate, which together with the progressing nucleotide cycle form the mechanistic basis for DNA recombination by continuous HJ branch migration. Branch migration allows RuvC to scan DNA until it finds its consensus sequence, where it cleaves and resolves cruciform DNA. This is Holliday junction branch migration complex subunit RuvB from Campylobacter hominis (strain ATCC BAA-381 / DSM 21671 / CCUG 45161 / LMG 19568 / NCTC 13146 / CH001A).